The sequence spans 322 residues: Pantothenate kinase (322 aa).

Residue 101 to 108 coordinates ATP; sequence GSVAVGKS.

It belongs to the prokaryotic pantothenate kinase family.

The protein localises to the cytoplasm. It carries out the reaction (R)-pantothenate + ATP = (R)-4'-phosphopantothenate + ADP + H(+). It functions in the pathway cofactor biosynthesis; coenzyme A biosynthesis; CoA from (R)-pantothenate: step 1/5. This is Pantothenate kinase from Psychromonas ingrahamii (strain DSM 17664 / CCUG 51855 / 37).